A 781-amino-acid polypeptide reads, in one-letter code: Catenin beta-1 (781 aa).

At A2 the chain carries N-acetylalanine. Residues 2 to 23 form an interaction with VCL region; sequence ATQADLMELDMAMEPDRKAAVS. At S23 the chain carries Phosphoserine; by GSK3-beta; alternate. S23 carries O-linked (GlcNAc) serine; alternate glycosylation. S29 is subject to Phosphoserine; by GSK3-beta. S33 and S37 each carry phosphoserine; by GSK3-beta and HIPK2. A disordered region spans residues 34–57; the sequence is GIHSGATTTAPSLSGKGNPEEEDV. T41 carries the phosphothreonine; by GSK3-beta modification. At S45 the chain carries Phosphoserine. K49 carries the post-translational modification N6-acetyllysine. Y64 bears the Phosphotyrosine; by PTK6 mark. Y142 carries the post-translational modification Phosphotyrosine; by FYN and PTK6. ARM repeat units follow at residues 151 to 191, 193 to 234, 235 to 276, 277 to 318, 319 to 360, 361 to 389, 400 to 441, 442 to 484, 489 to 530, 531 to 571, 594 to 636, and 637 to 666; these read RAIP…IMRS, QMVS…IFKS, GGIP…VRLA, GGLQ…ILAS, GGPQ…IVEA, GGMQ…RNLS, GLLG…VCQV, GGIE…AQNA, YGLP…LREQ, GAIP…EIVE, NTIP…AEGA, and TAPL…SEDK. Residues 156-178 form an interaction with BCL9 region; that stretch reads LTKLLNDEDQVVVNKAAVMVHQL. S191 bears the Phosphoserine mark. Residue S246 is modified to Phosphoserine; by CDK5. Phosphotyrosine is present on residues Y331 and Y333. The residue at position 552 (S552) is a Phosphoserine. T556 is subject to Phosphothreonine. C619 is modified (S-nitrosocysteine). S675 bears the Phosphoserine mark. The tract at residues 720–781 is disordered; sequence HSGGYGQDAL…NQLAWFDTDL (62 aa). Residues 734–745 are compositionally biased toward basic and acidic residues; that stretch reads MMEHEMGGHHPG. Residues 772–781 form an interaction with SCRIB region; the sequence is NQLAWFDTDL.

This sequence belongs to the beta-catenin family. In terms of assembly, two separate complex-associated pools are found in the cytoplasm. The majority is present as component of an E-cadherin/ catenin adhesion complex composed of at least E-cadherin/CDH1 and beta-catenin/CTNNB1, and possibly alpha-catenin/CTNNA1; the complex is located to adherens junctions. The stable association of CTNNA1 is controversial as CTNNA1 was shown not to bind to F-actin when assembled in the complex. Alternatively, the CTNNA1-containing complex may be linked to F-actin by other proteins such as LIMA1. Another cytoplasmic pool is part of a large complex containing AXIN1, AXIN2, APC, CSNK1A1 and GSK3B that promotes phosphorylation on N-terminal Ser and Thr residues and ubiquitination of CTNNB1. Interacts directly with AXIN1; the interaction is regulated by CK2 via BTRC and its subsequent degradation by the proteasome. Interacts directly with AXIN1; the interaction is regulated by CDK2 phosphorylation. Wnt-dependent activation of DVL antagonizes the action of GSK3B. When GSK3B activity is inhibited the complex dissociates, CTNNB1 is dephosphorylated and is no longer targeted for destruction. The stabilized protein translocates to the nucleus, where it binds TCF/LEF-1 family members, BCL9, BCL9L and possibly also RUVBL1 and CHD8. Binds CTNNBIP and EP300. CTNNB1 forms a ternary complex with LEF1 and EP300 that is disrupted by CTNNBIP1 binding. Interacts with TAX1BP3 (via the PDZ domain); this interaction inhibits the transcriptional activity of CTNNB1. Interacts with AJAP1, BAIAP1, CARM1, CTNNA3, CXADR and PCDH11Y. Binds NHERF1. Interacts with GLIS2. Interacts with XIRP1. Interacts with PTPRU (via the cytoplasmic juxtamembrane domain) and with SLC30A9. Interacts with EMD. Interacts with SCRIB. Interacts with TNIK and TCF7L2. Interacts with SESTD1 and TRPC4. Interacts directly with AXIN1; the interaction is regulated by CDK2 phosphorylation of AXIN1. Interacts with CAV1. Interacts with TRPV4. The TRPV4 and CTNNB1 complex can interact with CDH1. Interacts with VCL. Interacts with PTPRJ. Interacts with PKT7. Interacts with NANOS1. Interacts with CDK2, NDRG2, NEK2 and CDK5. Found in a complex composed of MACF1, APC, AXIN1, CTNNB1 and GSK3B. Interacts with PTK6. Interacts with SOX7; this interaction may lead to proteasomal degradation of active CTNNB1 and thus inhibition of Wnt/beta-catenin-stimulated transcription. Identified in a complex with HINT1 and MITF. Interacts with FHIT. The CTNNB1 and TCF4 complex interacts with PML. Interacts with FERMT2. Identified in a complex with TCF4 and FERMT2. Interacts with RAPGEF2. Interacts with FAT1 (via the cytoplasmic domain). Interacts with RORA. May interact with P-cadherin/CDH3. Interacts with RNF220. Interacts with CTNND2. Interacts (via the C-terminal region) with CBY1. The complex composed, at least, of APC, CTNNB1 and GSK3B interacts with JPT1; the interaction requires the inactive form of GSK3B (phosphorylated at 'Ser-9'). Interacts with DLG5. Interacts with FAM53B; promoting translocation to the nucleus. Interacts with TMEM170B. Interacts with AHI1. Interacts with GID8. Component of an cadherin:catenin adhesion complex composed of at least of CDH26, beta-catenin/CTNNB1, alpha-catenin/CTNNA1 and p120 catenin/CTNND1. Forms a complex comprising APPL1, RUVBL2, APPL2, HDAC1 and HDAC2. Interacts with IRF2BPL; mediates the ubiquitination and degradation of CTNNB1. Interacts with AMFR. Interacts with LMBR1L. Interacts with SOX30; prevents interaction of CTNNB1 with TCF7L2/TCF4 and leads to inhibition of Wnt signaling. Interacts with SOX9; inhibiting CTNNB1 activity by competing with the binding sites of TCF/LEF within CTNNB1, thereby inhibiting the Wnt signaling. Interacts with SPN/CD43 cytoplasmic tail. Interacts (when phosphorylated at Tyr-333) with isoform M2 of PKM (PKM2); promoting transcription activation. Interacts with PKP2 (via HEAD domain). Interacts with CDH1. Interacts (when unphosphorylated) with FLYWCH1, perhaps preventing interaction of CTNNB1 with TCF4, and thereby regulating transcription activation; phosphorylation of CTNNB1 may inhibit the interaction. Interacts (via the central armadillo domains) with probable transcriptional regulator ADNP (via N-terminal region); interaction is direct and stabilizes CTNNB1 by modulating its phosphorylation by glycogen synthase kinase-3 beta GSK3B. Interacts with NR5A2. Interacts with DSG2; the interaction promotes localization of CTNNB1 at cell junctions thus reducing its nuclear localization and subsequent transcription of CTNNB1/TCF-target genes. Post-translationally, phosphorylation by GSK3B requires prior phosphorylation of Ser-45 by another kinase. Phosphorylation proceeds then from Thr-41 to Ser-33. Phosphorylated by NEK2. EGF stimulates tyrosine phosphorylation. Phosphorylated on Ser-33 and Ser-37 by HIPK2. This phosphorylation triggers proteasomal degradation. Phosphorylation at Ser-552 by AMPK promotes stabilization of the protein, enhancing TCF/LEF-mediated transcription. Phosphorylation on Ser-191 and Ser-246 by CDK5. Phosphorylation by CDK2 regulates insulin internalization. Phosphorylation by PTK6 at Tyr-64, Tyr-142, Tyr-331 and/or Tyr-333 with the predominant site at Tyr-64 is not essential for inhibition of transcriptional activity. Phosphorylation by SRC at Tyr-333 promotes interaction with isoform M2 of PKM (PKM2); promoting transcription activation. In terms of processing, ubiquitinated by the SCF(BTRC) E3 ligase complex when phosphorylated by GSK3B, leading to its degradation. Ubiquitinated by a E3 ubiquitin ligase complex containing UBE2D1, SIAH1, CACYBP/SIP, SKP1, APC and TBL1X, leading to its subsequent proteasomal degradation. Ubiquitinated and degraded following interaction with SOX9. Ubiquitinated via 'Lys-11'- and 'Lys-29'-linked ubiquitin chains by UBR5, leading to its stabilization. S-nitrosylation at Cys-619 within adherens junctions promotes VEGF-induced, NO-dependent endothelial cell permeability by disrupting interaction with E-cadherin, thus mediating disassembly adherens junctions. Post-translationally, O-glycosylation at Ser-23 decreases nuclear localization and transcriptional activity, and increases localization to the plasma membrane and interaction with E-cadherin CDH1. In terms of processing, deacetylated at Lys-49 by SIRT1. As to expression, expressed in the testis.

The protein resides in the cytoplasm. Its subcellular location is the nucleus. It is found in the cytoskeleton. The protein localises to the cell junction. It localises to the adherens junction. The protein resides in the cell membrane. Its subcellular location is the microtubule organizing center. It is found in the centrosome. The protein localises to the spindle pole. It localises to the synapse. The protein resides in the cilium basal body. In terms of biological role, key downstream component of the canonical Wnt signaling pathway. In the absence of Wnt, forms a complex with AXIN1, AXIN2, APC, CSNK1A1 and GSK3B that promotes phosphorylation on N-terminal Ser and Thr residues and ubiquitination of CTNNB1 via BTRC and its subsequent degradation by the proteasome. In the presence of Wnt ligand, CTNNB1 is not ubiquitinated and accumulates in the nucleus, where it acts as a coactivator for transcription factors of the TCF/LEF family, leading to activate Wnt responsive genes. Also acts as a coactivator for other transcription factors, such as NR5A2. Promotes epithelial to mesenchymal transition/mesenchymal to epithelial transition (EMT/MET) via driving transcription of CTNNB1/TCF-target genes. Involved in the regulation of cell adhesion, as component of an E-cadherin:catenin adhesion complex. Acts as a negative regulator of centrosome cohesion. Involved in the CDK2/PTPN6/CTNNB1/CEACAM1 pathway of insulin internalization. Blocks anoikis of malignant kidney and intestinal epithelial cells and promotes their anchorage-independent growth by down-regulating DAPK2. Disrupts PML function and PML-NB formation by inhibiting RANBP2-mediated sumoylation of PML. Promotes neurogenesis by maintaining sympathetic neuroblasts within the cell cycle. Involved in chondrocyte differentiation via interaction with SOX9: SOX9-binding competes with the binding sites of TCF/LEF within CTNNB1, thereby inhibiting the Wnt signaling. Acts as a positive regulator of odontoblast differentiation during mesenchymal tooth germ formation, via promoting the transcription of differentiation factors such as LEF1, BMP2 and BMP4. Activity is repressed in a MSX1-mediated manner at the bell stage of mesenchymal tooth germ formation which prevents premature differentiation of odontoblasts. The polypeptide is Catenin beta-1 (Rattus norvegicus (Rat)).